A 350-amino-acid chain; its full sequence is Protein RecA (350 aa).

67–74 is an ATP binding site; sequence GPESSGKT.

Belongs to the RecA family.

It localises to the cytoplasm. In terms of biological role, can catalyze the hydrolysis of ATP in the presence of single-stranded DNA, the ATP-dependent uptake of single-stranded DNA by duplex DNA, and the ATP-dependent hybridization of homologous single-stranded DNAs. It interacts with LexA causing its activation and leading to its autocatalytic cleavage. The chain is Protein RecA from Chlamydia caviae (strain ATCC VR-813 / DSM 19441 / 03DC25 / GPIC) (Chlamydophila caviae).